Consider the following 500-residue polypeptide: Cytochrome P450 monooxygenase acrD (500 aa).

A helical transmembrane segment spans residues 13–32 (PYLSGTNLVWTLLLVGYIIP). 2 N-linked (GlcNAc...) asparagine glycosylation sites follow: asparagine 210 and asparagine 414. Cysteine 447 provides a ligand contact to heme.

Belongs to the cytochrome P450 family. Heme serves as cofactor.

It is found in the membrane. The protein operates within secondary metabolite biosynthesis. Its function is as follows. Cytochrome P450 monooxygenase; part of the cluster that mediates the biosynthesis of acurin A, a highly reduced polyketide coupled to a serine via a peptide bond. The activities of the highly reducing polyketide synthase acrA and the nonribosomal peptide synthetase acrB are collectively responsible for the synthesis of the acurin A core structure with a heptaketide backbone produced by acrA covalently fused to a L-serine by acrB. After the formation of the PK-NRP hybrid product, it is detached from acrB by reductive release to set up the formation of the lactam ring by aldol condensation. The hydrolyase acrC then catalyzes water loss to generate a double bond in the ring. This double bond is probably reduced, which is followed by three oxidations at C-22 to generate the carboxylic acid moiety, involving probably the FAD-binding monooxygenase acrE and the cytochrome P450 monooxygenases acrD and acrF. Finally, a last methylation step performed by the O-methyltransferase acrG leads to the production of acurin A. The protein is Cytochrome P450 monooxygenase acrD of Aspergillus aculeatus (strain ATCC 16872 / CBS 172.66 / WB 5094).